We begin with the raw amino-acid sequence, 57 residues long: Large ribosomal subunit protein eL37 (57 aa).

Zn(2+) contacts are provided by cysteine 20, cysteine 23, cysteine 35, and cysteine 38. A C4-type zinc finger spans residues 20 to 38 (CRRCGEKSYHKQKKVCASC).

It belongs to the eukaryotic ribosomal protein eL37 family. The cofactor is Zn(2+).

Its function is as follows. Binds to the 23S rRNA. The sequence is that of Large ribosomal subunit protein eL37 from Natronomonas pharaonis (strain ATCC 35678 / DSM 2160 / CIP 103997 / JCM 8858 / NBRC 14720 / NCIMB 2260 / Gabara) (Halobacterium pharaonis).